Reading from the N-terminus, the 310-residue chain is UDP-N-acetylenolpyruvoylglucosamine reductase (310 aa).

Residues 30-200 (RVGGPAQWLA…VAAEFQLEPG (171 aa)) enclose the FAD-binding PCMH-type domain. Arg-179 is a catalytic residue. The active-site Proton donor is Ser-230. The active site involves Glu-300.

It belongs to the MurB family. Requires FAD as cofactor.

The protein resides in the cytoplasm. The enzyme catalyses UDP-N-acetyl-alpha-D-muramate + NADP(+) = UDP-N-acetyl-3-O-(1-carboxyvinyl)-alpha-D-glucosamine + NADPH + H(+). It functions in the pathway cell wall biogenesis; peptidoglycan biosynthesis. Its function is as follows. Cell wall formation. In Synechococcus sp. (strain WH7803), this protein is UDP-N-acetylenolpyruvoylglucosamine reductase.